A 513-amino-acid chain; its full sequence is Na(+)/H(+) antiporter NhaB (513 aa).

9 helical membrane-spanning segments follow: residues Ile21 to Val41, Ile88 to Met108, Leu119 to Phe139, Leu243 to Phe263, Met299 to Ala318, Ile322 to Gly344, Pro350 to Leu370, Leu389 to Gly409, and Met477 to Leu497.

Belongs to the NhaB Na(+)/H(+) (TC 2.A.34) antiporter family.

Its subcellular location is the cell inner membrane. The catalysed reaction is 2 Na(+)(in) + 3 H(+)(out) = 2 Na(+)(out) + 3 H(+)(in). In terms of biological role, na(+)/H(+) antiporter that extrudes sodium in exchange for external protons. In Actinobacillus pleuropneumoniae serotype 5b (strain L20), this protein is Na(+)/H(+) antiporter NhaB.